A 316-amino-acid polypeptide reads, in one-letter code: Ornithine carbamoyltransferase (316 aa).

Carbamoyl phosphate contacts are provided by residues 57–60, Q84, R108, and 135–138; these read STRT and HPCQ. L-ornithine is bound by residues N166, D230, and 234–235; that span reads SM. Carbamoyl phosphate is bound by residues 269–270 and R297; that span reads CL.

Belongs to the aspartate/ornithine carbamoyltransferase superfamily. OTCase family.

Its subcellular location is the cytoplasm. The catalysed reaction is carbamoyl phosphate + L-ornithine = L-citrulline + phosphate + H(+). It participates in amino-acid degradation; L-arginine degradation via ADI pathway; carbamoyl phosphate from L-arginine: step 2/2. Its function is as follows. Reversibly catalyzes the transfer of the carbamoyl group from carbamoyl phosphate (CP) to the N(epsilon) atom of ornithine (ORN) to produce L-citrulline. In Bacillus cereus (strain 03BB102), this protein is Ornithine carbamoyltransferase.